The chain runs to 241 residues: Ribosomal RNA small subunit methyltransferase G (241 aa).

S-adenosyl-L-methionine is bound by residues G96, F101, 119–121 (EAS), 147–148 (VE), and R166.

It belongs to the methyltransferase superfamily. RNA methyltransferase RsmG family.

It is found in the cytoplasm. It catalyses the reaction guanosine(527) in 16S rRNA + S-adenosyl-L-methionine = N(7)-methylguanosine(527) in 16S rRNA + S-adenosyl-L-homocysteine. Functionally, specifically methylates the N7 position of guanine in position 527 of 16S rRNA. The polypeptide is Ribosomal RNA small subunit methyltransferase G (Syntrophus aciditrophicus (strain SB)).